Here is a 421-residue protein sequence, read N- to C-terminus: Vinorine synthase (421 aa).

Catalysis depends on proton acceptor residues His160 and Asp362.

Belongs to the plant acyltransferase family. In terms of assembly, monomer. As to expression, mainly expressed in roots and, to a lower level, in leaves.

The catalysed reaction is 16-epivellosimine + acetyl-CoA = vinorine + CoA. It participates in alkaloid biosynthesis; ajmaline biosynthesis. Complete inhibition by 4-(2-aminoethyl)-benzenesulfonyl fluoride (AEBSF), N-tosyl-L-phenylalanine chloromethylketone (TPCK), Hg(2+) and diethyl-pyrocarbonate (DEPC). 50% inhibition by N-(N-(L-3-trans-carboxirane-2-carbonyl)-L-leucyl)-agmanitine (E-64), N-alpha-p-tosyl-L-lysine chloromethylketone (TLCK) and phenylmethylsulfonyl fluoride (PMSF). In terms of biological role, acetyltransferase involved in the biosynthesis of ajmaline-type monoterpenoid indole alkaloids (MIAs) natural products, important plant-derived pharmaceuticals used in the therapy of heart disorders. Catalyzes the conversion of 16-epivellosimine to vinorine, precursor of vomilenine, an intermediate chemical in the biosynthesis of ajmaline. Acts on gardneral, but not on polyneuridine aldehyde or N-methylgardneral. This is Vinorine synthase from Rauvolfia serpentina (Serpentine wood).